Here is a 252-residue protein sequence, read N- to C-terminus: Imidazole glycerol phosphate synthase subunit HisF (252 aa).

Catalysis depends on residues D11 and D130.

The protein belongs to the HisA/HisF family. Heterodimer of HisH and HisF.

It localises to the cytoplasm. It carries out the reaction 5-[(5-phospho-1-deoxy-D-ribulos-1-ylimino)methylamino]-1-(5-phospho-beta-D-ribosyl)imidazole-4-carboxamide + L-glutamine = D-erythro-1-(imidazol-4-yl)glycerol 3-phosphate + 5-amino-1-(5-phospho-beta-D-ribosyl)imidazole-4-carboxamide + L-glutamate + H(+). Its pathway is amino-acid biosynthesis; L-histidine biosynthesis; L-histidine from 5-phospho-alpha-D-ribose 1-diphosphate: step 5/9. In terms of biological role, IGPS catalyzes the conversion of PRFAR and glutamine to IGP, AICAR and glutamate. The HisF subunit catalyzes the cyclization activity that produces IGP and AICAR from PRFAR using the ammonia provided by the HisH subunit. This is Imidazole glycerol phosphate synthase subunit HisF from Anoxybacillus flavithermus (strain DSM 21510 / WK1).